A 480-amino-acid polypeptide reads, in one-letter code: Serine/threonine-protein kinase WAG2 (480 aa).

Residues 88 to 396 (LKLIRHLGTG…AQDIKRHPFF (309 aa)) form the Protein kinase domain. Residues 94–102 (LGTGNLGRV) and Lys-117 contribute to the ATP site. Asp-213 (proton acceptor) is an active-site residue.

This sequence belongs to the protein kinase superfamily. Ser/Thr protein kinase family. Expressed in root tips, lateral root primordia and emerging true leaf primordia.

It is found in the cytoplasm. It localises to the cytosol. The enzyme catalyses L-seryl-[protein] + ATP = O-phospho-L-seryl-[protein] + ADP + H(+). The catalysed reaction is L-threonyl-[protein] + ATP = O-phospho-L-threonyl-[protein] + ADP + H(+). Serine/threonine-protein kinase involved in the regulation of auxin signaling. Acts as a positive regulator of cellular auxin efflux and regulates organ development by enhancing PIN-mediated polar auxin transport. Phosphorylates conserved serine residues in the PIN auxin efflux carriers. Phosphorylation of PIN proteins is required and sufficient for apical-basal PIN polarity that enables directional intercellular auxin fluxes, which mediate differential growth, tissue patterning and organogenesis. Acts as a suppressor of root waving. This Arabidopsis thaliana (Mouse-ear cress) protein is Serine/threonine-protein kinase WAG2 (WAG2).